A 432-amino-acid polypeptide reads, in one-letter code: Keratin, type I cytoskeletal 17 (432 aa).

The segment at M1–S24 is disordered. Residues M1–G83 are head. A phosphoserine mark is found at S12 and S13. K15 participates in a covalent cross-link: Glycyl lysine isopeptide (Lys-Gly) (interchain with G-Cter in SUMO1); alternate. K15 is covalently cross-linked (Glycyl lysine isopeptide (Lys-Gly) (interchain with G-Cter in SUMO2); alternate). S25, S32, and S39 each carry phosphoserine. Phosphoserine; by RPS6KA1 is present on S44. A coil 1A region spans residues E84–Y120. One can recognise an IF rod domain in the interval E84–L395. At T110 the chain carries Phosphothreonine. Positions Q121–I138 are linker 1. Positions E139–R230 are coil 1B. A linker 12 region spans residues G231–S250. A coil 2 region spans residues R251 to D392. K278 participates in a covalent cross-link: Glycyl lysine isopeptide (Lys-Gly) (interchain with G-Cter in SUMO2). Residue T279 is modified to Phosphothreonine. S323 is subject to Phosphoserine. The tract at residues A393–R432 is tail. Residues K399, K400, and K419 each participate in a glycyl lysine isopeptide (Lys-Gly) (interchain with G-Cter in SUMO1); alternate cross-link. Residues K399, K400, and K419 each participate in a glycyl lysine isopeptide (Lys-Gly) (interchain with G-Cter in SUMO2); alternate cross-link.

This sequence belongs to the intermediate filament family. Heterodimer of a type I and a type II keratin. KRT17 associates with KRT6 isomers (KRT6A or KRT6B). Interacts with TRADD and SFN. Phosphorylation at Ser-44 occurs in a growth- and stress-dependent fashion in skin keratinocytes, it has no effect on filament organization.

It is found in the cytoplasm. Type I keratin involved in the formation and maintenance of various skin appendages, specifically in determining shape and orientation of hair. Required for the correct growth of hair follicles, in particular for the persistence of the anagen (growth) state. Modulates the function of TNF-alpha in the specific context of hair cycling. Regulates protein synthesis and epithelial cell growth through binding to the adapter protein SFN and by stimulating Akt/mTOR pathway. Involved in tissue repair. May be a marker of basal cell differentiation in complex epithelia and therefore indicative of a certain type of epithelial 'stem cells'. Acts as a promoter of epithelial proliferation by acting a regulator of immune response in skin: promotes Th1/Th17-dominated immune environment contributing to the development of basaloid skin tumors. May act as an autoantigen in the immunopathogenesis of psoriasis, with certain peptide regions being a major target for autoreactive T-cells and hence causing their proliferation. The sequence is that of Keratin, type I cytoskeletal 17 from Pan troglodytes (Chimpanzee).